Here is a 152-residue protein sequence, read N- to C-terminus: Superoxide dismutase [Cu-Zn] (152 aa).

3 residues coordinate Cu cation: H45, H47, and H62. A disulfide bond links C56 and C145. H62, H70, H79, and D82 together coordinate Zn(2+). H119 contributes to the Cu cation binding site.

The protein belongs to the Cu-Zn superoxide dismutase family. In terms of assembly, homodimer. The cofactor is Cu cation. Zn(2+) serves as cofactor.

Its subcellular location is the cytoplasm. The enzyme catalyses 2 superoxide + 2 H(+) = H2O2 + O2. Destroys radicals which are normally produced within the cells and which are toxic to biological systems. The protein is Superoxide dismutase [Cu-Zn] (SODCC) of Panax ginseng (Korean ginseng).